We begin with the raw amino-acid sequence, 106 residues long: Toxin-like structure LSTX-D5 (106 aa).

Positions 1-20 are cleaved as a signal peptide; it reads MMKVLVVVALLVTLISYSSS. Residues 21–41 constitute a propeptide that is removed on maturation; sequence EGIDDLETDELLSLMANEQTR. 4 disulfides stabilise this stretch: Cys-45–Cys-60, Cys-52–Cys-69, Cys-59–Cys-85, and Cys-71–Cys-83.

Belongs to the neurotoxin 19 (CSTX) family. 02 (D7) subfamily. As to expression, expressed by the venom gland.

It is found in the secreted. The sequence is that of Toxin-like structure LSTX-D5 from Lycosa singoriensis (Wolf spider).